Here is a 282-residue protein sequence, read N- to C-terminus: MTHWPSPAKLNLFLYITGQRADGYHTLQTLFQFLDYGDTLHIEPRRDGEIHLLTPVNGVENEDNLIVRAAQLLMKIASESGRLPAGSGADISIEKRLPMGGGLGGGSSNAATVLVALNHLWQCGLSIDELATLGLTLGADVPVFVRGHAAFAEGVGEILTPVNPPEKWYLVAHPGVSIPTPVIFKDPQLPRNTPKRSIDTLLKCEFSNDCEVIARKRFREVDAALSWLLEYAPSRLTGTGACVFAEFDTESCARQVLEQAPEWLNAFVAKGVNLSPLHRELL.

Lys9 is an active-site residue. 98–108 (PMGGGLGGGSS) is an ATP binding site. The active site involves Asp140.

The protein belongs to the GHMP kinase family. IspE subfamily. In terms of assembly, homodimer.

The catalysed reaction is 4-CDP-2-C-methyl-D-erythritol + ATP = 4-CDP-2-C-methyl-D-erythritol 2-phosphate + ADP + H(+). It functions in the pathway isoprenoid biosynthesis; isopentenyl diphosphate biosynthesis via DXP pathway; isopentenyl diphosphate from 1-deoxy-D-xylulose 5-phosphate: step 3/6. Functionally, catalyzes the phosphorylation of the position 2 hydroxy group of 4-diphosphocytidyl-2C-methyl-D-erythritol. This is 4-diphosphocytidyl-2-C-methyl-D-erythritol kinase from Salmonella paratyphi A (strain ATCC 9150 / SARB42).